The primary structure comprises 293 residues: Ethanolamine ammonia-lyase small subunit (293 aa).

The adenosylcob(III)alamin site is built by Val-207 and Glu-228.

The protein belongs to the EutC family. In terms of assembly, the basic unit is a heterodimer which dimerizes to form tetramers. The heterotetramers trimerize; 6 large subunits form a core ring with 6 small subunits projecting outwards. Adenosylcob(III)alamin is required as a cofactor.

The protein resides in the bacterial microcompartment. The enzyme catalyses ethanolamine = acetaldehyde + NH4(+). It participates in amine and polyamine degradation; ethanolamine degradation. In terms of biological role, catalyzes the deamination of various vicinal amino-alcohols to oxo compounds. Allows this organism to utilize ethanolamine as the sole source of nitrogen and carbon in the presence of external vitamin B12. In Listeria monocytogenes serovar 1/2a (strain ATCC BAA-679 / EGD-e), this protein is Ethanolamine ammonia-lyase small subunit.